The chain runs to 238 residues: IkB-like protein (238 aa).

4 ANK repeats span residues 48 to 77 (GSSV…PGEI), 86 to 115 (DGNS…KNGT), 123 to 152 (NGMT…DPTQ), and 157 to 187 (RGFT…PLYM). Residues 80–86 (PHRRDKD) carry the Nuclear localization signal motif. Residues 202-213 (KKKPKIIITGCK) carry the Nuclear localization signal motif. Positions 205-212 (PKIIITGC) match the PxIxITxC motif; Interaction with host PPP3CA motif. The short motif at 227-230 (FLCV) is the FLCV motif element.

This sequence belongs to the asfivirus A238L family. In terms of assembly, interacts with host PPIA. Interacts with host PPP3CA/Calcineurin. Interacts with host RELA/p65; interaction of the 32 kDa form with host RELA results in the formation of a stable complex with NF-kappa-B. Interacts with host PPP3R1. Interacts with host EP300; this interaction inhibits the association of host EP300 with host RELA, JUN and NFATC2. Post-translationally, the protein exists in a 28 kDa and a 32 kDa form, probably due to post-translational modifications which are neither phosphorylation, nor sumoylation.

It localises to the host nucleus. Its subcellular location is the host cytoplasm. Functionally, I-kappa-B- (IkB)-like protein that inhibits the binding of NF-kappa-B to DNA, thereby down-regulating pro-inflammatory cytokine production. Forms a heterodimer with the NF-kappa-B subunit RELA/p65 and prevents the activation of the NF-kappa-B transcription factor. Also inhibits the host calcineurin phosphatase activity, which is required for the induction of nuclear factor of activated T cells(NFAT)-dependent immune response genes. Inhibits calcineurin function, which is required for the induction of nuclear factor of activated T cells (NFAT)-dependent immune response genes. Prevents the binding of substrates to calcineurin without affecting the phosphatase activity. Does not contain the serine residues that are phosphorylated by host IkB kinase and thus is not degraded following stimulation of the NFkB pathway. This African swine fever virus (strain Badajoz 1971 Vero-adapted) (Ba71V) protein is IkB-like protein (A238L).